A 727-amino-acid polypeptide reads, in one-letter code: Probable acyl-activating enzyme 18, peroxisomal (727 aa).

Positions S725 to I727 match the Microbody targeting signal motif.

Belongs to the ATP-dependent AMP-binding enzyme family. Expressed in flowers.

It localises to the peroxisome. Its function is as follows. May be involved in the peroxisomal activation of 2,4-dichlorophenoxybutyric acid (2,4-DB), a precursor of active auxins that inhibit root growth. This chain is Probable acyl-activating enzyme 18, peroxisomal (AAE18), found in Arabidopsis thaliana (Mouse-ear cress).